Here is a 702-residue protein sequence, read N- to C-terminus: Ribosomal RNA large subunit methyltransferase K/L (702 aa).

Positions 43–154 (LIYQSLMWSR…KETASIALDL (112 aa)) constitute a THUMP domain.

Belongs to the methyltransferase superfamily. RlmKL family.

It is found in the cytoplasm. It carries out the reaction guanosine(2445) in 23S rRNA + S-adenosyl-L-methionine = N(2)-methylguanosine(2445) in 23S rRNA + S-adenosyl-L-homocysteine + H(+). It catalyses the reaction guanosine(2069) in 23S rRNA + S-adenosyl-L-methionine = N(2)-methylguanosine(2069) in 23S rRNA + S-adenosyl-L-homocysteine + H(+). Functionally, specifically methylates the guanine in position 2445 (m2G2445) and the guanine in position 2069 (m7G2069) of 23S rRNA. In Salmonella agona (strain SL483), this protein is Ribosomal RNA large subunit methyltransferase K/L.